The sequence spans 43 residues: Iota-conotoxin-like Fi11.6 (43 aa).

4 disulfides stabilise this stretch: C2/C16, C9/C19, C15/C24, and C18/C35. A 4-hydroxyproline modification is found at P8. P26 carries the 4-hydroxyproline modification. W30 carries the post-translational modification 6'-bromotryptophan. A D-phenylalanine modification is found at F41.

Belongs to the conotoxin I1 superfamily. As to expression, expressed by the venom duct.

It is found in the secreted. Its function is as follows. Iota-conotoxins bind to voltage-gated sodium channels (Nav) and act as agonists by shifting the voltage-dependence of activation to more hyperpolarized levels. Produces general excitatory symptoms. In Conus figulinus (Fig cone), this protein is Iota-conotoxin-like Fi11.6.